Here is a 292-residue protein sequence, read N- to C-terminus: Elongation factor Ts (292 aa).

Residues 82–85 (TDFV) are involved in Mg(2+) ion dislocation from EF-Tu.

The protein belongs to the EF-Ts family.

The protein localises to the cytoplasm. In terms of biological role, associates with the EF-Tu.GDP complex and induces the exchange of GDP to GTP. It remains bound to the aminoacyl-tRNA.EF-Tu.GTP complex up to the GTP hydrolysis stage on the ribosome. The protein is Elongation factor Ts of Bordetella parapertussis (strain 12822 / ATCC BAA-587 / NCTC 13253).